The primary structure comprises 510 residues: MTTIRTLVVAAEAFPLAKTGGLGDAVAGMVQALGHRPGGVDVQCELLMPAYRGTLDRLYRPRTVARLGGLPGGPASLVRGHCPGSGLSVLLLRNDALYDRPGIYVDDSGQGYPDNARRYAALAHAAARLAQGLPGLRPPHVVHAHDWHAALAPLLIHAAGLHYVKTLLTIHNLAFQGTFPAELASALGIPLACRHDDGALSDDRVNFLKAGIRYATRVTTVSRAYAREILTPAFGCGLHGLLRARGADLSPVPNGIDTALWNPAADPHLGGLRFDALDMRNKACCKAALQAELGLQLRADATVLAMGSRLTGQKMADVAIAALPALLEAHEHLQFALIGRGEPDLEAALRALAARYPGRCAVHIGYDEPLAHRLHAGADLLLHGSRFEPFGLTPLYAMRYGTLPVASRVGGMVDTIRDPGPAIEESCAGQGTGFLFDGSEPADMRQAVTRALRALAKPAVRDAMRRNAMQADFSWRTSAQAYAGLYANLASGPQRGRVPAPTLPLLANAA.

Residue lysine 18 participates in ADP-alpha-D-glucose binding.

It belongs to the glycosyltransferase 1 family. Bacterial/plant glycogen synthase subfamily.

It catalyses the reaction [(1-&gt;4)-alpha-D-glucosyl](n) + ADP-alpha-D-glucose = [(1-&gt;4)-alpha-D-glucosyl](n+1) + ADP + H(+). Its pathway is glycan biosynthesis; glycogen biosynthesis. Functionally, synthesizes alpha-1,4-glucan chains using ADP-glucose. This is Glycogen synthase from Bordetella bronchiseptica (strain ATCC BAA-588 / NCTC 13252 / RB50) (Alcaligenes bronchisepticus).